Here is a 268-residue protein sequence, read N- to C-terminus: 2,5-diamino-6-ribosylamino-4(3H)-pyrimidinone 5'-phosphate reductase (268 aa).

NADP(+) contacts are provided by residues Thr68, Asp72, 103-106, and 191-195; these read SNLR and GAELL.

The protein belongs to the HTP reductase family. In terms of assembly, homodimer.

The enzyme catalyses 2,5-diamino-6-(1-D-ribitylamino)pyrimidin-4(3H)-one 5'-phosphate + NADP(+) = 2,5-diamino-6-(1-D-ribosylamino)pyrimidin-4(3H)-one 5'-phosphate + NADPH + H(+). It catalyses the reaction 2,5-diamino-6-(1-D-ribitylamino)pyrimidin-4(3H)-one 5'-phosphate + NAD(+) = 2,5-diamino-6-(1-D-ribosylamino)pyrimidin-4(3H)-one 5'-phosphate + NADH + H(+). It participates in cofactor biosynthesis; riboflavin biosynthesis. Functionally, catalyzes an early step in riboflavin biosynthesis, the NADPH-dependent reduction of the ribose side chain of 2,5-diamino-6-ribosylamino-4(3H)-pyrimidinone 5'-phosphate, yielding 2,5-diamino-6-ribitylamino-4(3H)-pyrimidinone 5'-phosphate. The polypeptide is 2,5-diamino-6-ribosylamino-4(3H)-pyrimidinone 5'-phosphate reductase (Schizosaccharomyces pombe (strain 972 / ATCC 24843) (Fission yeast)).